The sequence spans 192 residues: Ribosomal RNA small subunit methyltransferase G (192 aa).

Residues Gly-63, Leu-68, 112–113 (IE), and Arg-125 contribute to the S-adenosyl-L-methionine site.

Belongs to the methyltransferase superfamily. RNA methyltransferase RsmG family.

The protein localises to the cytoplasm. It carries out the reaction guanosine(527) in 16S rRNA + S-adenosyl-L-methionine = N(7)-methylguanosine(527) in 16S rRNA + S-adenosyl-L-homocysteine. Specifically methylates the N7 position of guanine in position 527 of 16S rRNA. This chain is Ribosomal RNA small subunit methyltransferase G, found in Rickettsia africae (strain ESF-5).